The chain runs to 680 residues: Translation factor GUF1 homolog, chloroplastic (680 aa).

A chloroplast-targeting transit peptide spans 1-51 (MATATASRLAVPAPRTSPQAPGRRRPAAPLPSAPPRPRALSAAPRGRVVCP). Residues 1-68 (MATATASRLA…ASTTDAGQDR (68 aa)) are disordered. Over residues 28–37 (APLPSAPPRP) the composition is skewed to pro residues. A compositionally biased stretch (low complexity) spans 38 to 60 (RALSAAPRGRVVCPAAPASSPAS). Residues 75-256 (SNIRNFSIIA…AIVTKIPPPQ (182 aa)) enclose the tr-type G domain. GTP-binding positions include 84–91 (AHIDHGKS), 149–153 (DTPGH), and 203–206 (NKID).

Belongs to the TRAFAC class translation factor GTPase superfamily. Classic translation factor GTPase family. LepA subfamily.

The protein localises to the plastid. Its subcellular location is the chloroplast. The enzyme catalyses GTP + H2O = GDP + phosphate + H(+). Functionally, promotes chloroplast protein synthesis. May act as a fidelity factor of the translation reaction, by catalyzing a one-codon backward translocation of tRNAs on improperly translocated ribosomes. This chain is Translation factor GUF1 homolog, chloroplastic, found in Oryza sativa subsp. japonica (Rice).